The chain runs to 303 residues: Probable 5-dehydro-4-deoxyglucarate dehydratase (303 aa).

It belongs to the DapA family.

The catalysed reaction is 5-dehydro-4-deoxy-D-glucarate + H(+) = 2,5-dioxopentanoate + CO2 + H2O. It functions in the pathway carbohydrate acid metabolism; D-glucarate degradation; 2,5-dioxopentanoate from D-glucarate: step 2/2. The sequence is that of Probable 5-dehydro-4-deoxyglucarate dehydratase from Acinetobacter baumannii (strain ATCC 17978 / DSM 105126 / CIP 53.77 / LMG 1025 / NCDC KC755 / 5377).